The chain runs to 766 residues: Protein transport protein Sec23B (766 aa).

An N-acetylalanine modification is found at alanine 2. Zn(2+) contacts are provided by cysteine 61, cysteine 66, cysteine 85, and cysteine 88. Position 564 is an N6-acetyllysine (lysine 564). A Gelsolin-like repeat occupies 633–719 (PEPVLLDSSS…EHGGSQARFL (87 aa)).

This sequence belongs to the SEC23/SEC24 family. SEC23 subfamily. COPII is composed of at least five proteins: the Sec23/24 complex, the Sec13/31 complex and Sar1. Interacts with SAR1A.

The protein resides in the cytoplasmic vesicle. The protein localises to the COPII-coated vesicle membrane. Its subcellular location is the endoplasmic reticulum membrane. It is found in the cytoplasm. It localises to the cytosol. Its function is as follows. Component of the coat protein complex II (COPII) which promotes the formation of transport vesicles from the endoplasmic reticulum (ER). The coat has two main functions, the physical deformation of the endoplasmic reticulum membrane into vesicles and the selection of cargo molecules for their transport to the Golgi complex. The protein is Protein transport protein Sec23B of Pongo abelii (Sumatran orangutan).